The primary structure comprises 66 residues: Beta-mammal toxin Co1 (66 aa).

Positions 1 to 66 (KEGYLVNHST…VWPLPKKTCN (66 aa)) constitute an LCN-type CS-alpha/beta domain. 4 disulfides stabilise this stretch: Cys12–Cys65, Cys16–Cys41, Cys25–Cys46, and Cys29–Cys48.

In terms of tissue distribution, expressed by the venom gland.

It localises to the secreted. In terms of biological role, beta toxins bind voltage-independently at site-4 of sodium channels (Nav) and shift the voltage of activation toward more negative potentials thereby affecting sodium channel activation and promoting spontaneous and repetitive firing. This toxin acts on human Nav1.6/SCN8A voltage-gated sodium channels. In vivo, is lethal to mice 40 minutes after intraperitoneal injection at a dose of 5ug. No activity is observed when injected into crickets or woodlice. The polypeptide is Beta-mammal toxin Co1 (Centruroides ornatus (Scorpion)).